Consider the following 454-residue polypeptide: Notoamide biosynthesis cluster protein M' (454 aa).

N-linked (GlcNAc...) asparagine glycosylation is found at N51 and N74. A compositionally biased stretch (basic residues) spans 205 to 219 (KARSKEKKPKRKKSK). The segment at 205 to 224 (KARSKEKKPKRKKSKAEKEH) is disordered. The next 2 helical transmembrane spans lie at 334-354 (MTTV…SGLF) and 375-395 (FWMY…VWGV).

It localises to the membrane. In terms of biological role, part of the gene cluster that mediates the biosynthesis of notoamide, a fungal indole alkaloid that belongs to a family of natural products containing a characteristic bicyclo[2.2.2]diazaoctane core. The first step of notoamide biosynthesis involves coupling of L-proline and L-tryptophan by the bimodular NRPS notE', to produce cyclo-L-tryptophan-L-proline called brevianamide F. The reverse prenyltransferase notF' then acts as a deoxybrevianamide E synthase and converts brevianamide F to deoxybrevianamide E via reverse prenylation at C-2 of the indole ring leading to the bicyclo[2.2.2]diazaoctane core. Deoxybrevianamide E is further hydroxylated at C-6 of the indole ring, likely catalyzed by the cytochrome P450 monooxygenase notG', to yield 6-hydroxy-deoxybrevianamide E. 6-hydroxy-deoxybrevianamide E is a specific substrate of the prenyltransferase notC' for normal prenylation at C-7 to produce 6-hydroxy-7-prenyl-deoxybrevianamide, also called notoamide S. As the proposed pivotal branching point in notoamide biosynthesis, notoamide S can be diverted to notoamide E through an oxidative pyran ring closure putatively catalyzed by either notH' cytochrome P450 monooxygenase or the notD' FAD-linked oxidoreductase. This step would be followed by an indole 2,3-epoxidation-initiated pinacol-like rearrangement catalyzed by the notB' FAD-dependent monooxygenase leading to the formation of notoamide C and notoamide D. On the other hand notoamide S is converted to notoamide T by notH' (or notD'), a bifunctional oxidase that also functions as the intramolecular Diels-Alderase responsible for generation of (-)-notoamide T. To generate antipodal (+)-notoaminide T, notH (or notD) in Aspergillus strain MF297-2 is expected to catalyze a Diels-Alder reaction leading to the opposite stereochemistry. The remaining oxidoreductase notD' (or notH') likely catalyzes the oxidative pyran ring formation to yield (-)-stephacidin A. The FAD-dependent monooxygenase notI' is highly similar to notB' and is predicted to catalyze a similar conversion from (-)-stephacidin A to (+)-notoamide B via the 2,3-epoxidation of (-)-stephacidin A followed by a pinacol-type rearrangement. Finally, it remains unclear which enzyme could be responsible for the final hydroxylation steps leading to notoamide A and sclerotiamide. The function of notM' in the notoamide biosynthesis has not been determined yet. The sequence is that of Notoamide biosynthesis cluster protein M' from Aspergillus versicolor.